A 377-amino-acid polypeptide reads, in one-letter code: Mucin-7 (377 aa).

The signal sequence occupies residues 1–22 (MKTLPLFVCICALSACFSFSEG). Residues 70-100 (CRPKLPPSPNNPPKFPNPHQPPKHPDKNSSV) are disordered. The segment covering 73–89 (KLPPSPNNPPKFPNPHQ) has biased composition (pro residues). Residues Asn-97, Asn-128, Asn-135, and Asn-146 are each glycosylated (N-linked (GlcNAc...) asparagine). Residues 150-355 (SVATLAPVNS…QPTSAPGQNK (206 aa)) are disordered. Repeat copies occupy residues 165 to 187 (TTAAPPTPSATTPAPPSSSAPPE), 188 to 210 (TTAAPPTPSATTQAPPSSSAPPE), 211 to 233 (TTAAPPTPPATTPAPPSSSAPPE), 234 to 256 (TTAAPPTPSATTPAPLSSSAPPE), 257 to 279 (TTAVPPTPSATTLDPSSASAPPE), and 280 to 302 (TTAAPPTPSATTPAPPSSPAPQE). Pro residues predominate over residues 169 to 183 (PPTPSATTPAPPSSS). Thr-176 is a glycosylation site (O-linked (GalNAc) threonine; by GALNT13). O-linked (GalNAc) serine; by GALNT13 glycans are attached at residues Ser-182 and Ser-183. The segment covering 184–214 (APPETTAAPPTPSATTQAPPSSSAPPETTAA) has biased composition (low complexity). Thr-188 and Thr-189 each carry an O-linked (GalNAc) threonine; by GALNT13 glycan. Residues 215–229 (PPTPPATTPAPPSSS) show a composition bias toward pro residues. Residues 230 to 283 (APPETTAAPPTPSATTPAPLSSSAPPETTAVPPTPSATTLDPSSASAPPETTAA) show a composition bias toward low complexity. Residues 284 to 298 (PPTPSATTPAPPSSP) show a composition bias toward pro residues. Over residues 309–329 (TTPNSSPTTLAPDTSETSAAP) the composition is skewed to polar residues. The span at 330 to 348 (THQTTTSVTTQTTTTKQPT) shows a compositional bias: low complexity.

In terms of assembly, monomer. In terms of processing, N- and O-glycosylated. Contains fucose, mannose, galactose, N-acetylglucosamine and N-acetylgalactosamine. In terms of tissue distribution, expressed in salivary gland tissues and only in those that contain mucous acinar cells (e.g. sublingual and submandibular glands) and not in salivary glands containing only serous acinar cells (e.g. parotid gland).

The protein resides in the secreted. Its function is as follows. May function in a protective capacity by promoting the clearance of bacteria in the oral cavity and aiding in mastication, speech, and swallowing. Binds P.aeruginosa pili. This is Mucin-7 (MUC7) from Homo sapiens (Human).